The chain runs to 303 residues: Recombination-associated protein RdgC (303 aa).

It belongs to the RdgC family.

Its subcellular location is the cytoplasm. It is found in the nucleoid. In terms of biological role, may be involved in recombination. This chain is Recombination-associated protein RdgC, found in Enterobacter sp. (strain 638).